Reading from the N-terminus, the 585-residue chain is Protein-lysine N-methyltransferase EFM1 (585 aa).

Positions Pro23–Gly281 constitute an SET domain. Tyr280 contributes to the S-adenosyl-L-methionine binding site.

It belongs to the class V-like SAM-binding methyltransferase superfamily. RKM1 family.

It is found in the cytoplasm. S-adenosyl-L-methionine-dependent protein-lysine N-methyltransferase that monomethylates elongation factor 1-alpha (TEF1/TEF2) at 'Lys-30'. The sequence is that of Protein-lysine N-methyltransferase EFM1 from Saccharomyces cerevisiae (strain ATCC 204508 / S288c) (Baker's yeast).